We begin with the raw amino-acid sequence, 154 residues long: Aspartate carbamoyltransferase regulatory chain (154 aa).

Residues Cys-109, Cys-114, Cys-138, and Cys-141 each coordinate Zn(2+).

Belongs to the PyrI family. Contains catalytic and regulatory chains. It depends on Zn(2+) as a cofactor.

In terms of biological role, involved in allosteric regulation of aspartate carbamoyltransferase. This is Aspartate carbamoyltransferase regulatory chain from Aeromonas hydrophila subsp. hydrophila (strain ATCC 7966 / DSM 30187 / BCRC 13018 / CCUG 14551 / JCM 1027 / KCTC 2358 / NCIMB 9240 / NCTC 8049).